The primary structure comprises 725 residues: Malate synthase G 2 (725 aa).

Acetyl-CoA is bound by residues valine 118, arginine 125 to tyrosine 126, serine 276, and arginine 313. Arginine 340 functions as the Proton acceptor in the catalytic mechanism. Residues arginine 340, glutamate 429, and glycine 454–aspartate 457 contribute to the glyoxylate site. Mg(2+) contacts are provided by glutamate 429 and aspartate 457. Proline 538 provides a ligand contact to acetyl-CoA. The residue at position 619 (cysteine 619) is a Cysteine sulfenic acid (-SOH). Aspartate 633 serves as the catalytic Proton donor.

The protein belongs to the malate synthase family. GlcB subfamily. As to quaternary structure, monomer. Mg(2+) is required as a cofactor.

The protein resides in the cytoplasm. The enzyme catalyses glyoxylate + acetyl-CoA + H2O = (S)-malate + CoA + H(+). The protein operates within carbohydrate metabolism; glyoxylate cycle; (S)-malate from isocitrate: step 2/2. Involved in the glycolate utilization. Catalyzes the condensation and subsequent hydrolysis of acetyl-coenzyme A (acetyl-CoA) and glyoxylate to form malate and CoA. This is Malate synthase G 2 from Pseudomonas syringae pv. tomato (strain ATCC BAA-871 / DC3000).